The chain runs to 461 residues: Secreted 45 kDa protein (461 aa).

The first 27 residues, 1 to 27 (MKKKIISAILMSTVILSAAAPLSGVYA), serve as a signal peptide directing secretion. Residues 264-329 (SSASASSSQA…GNTNSGTSTG (66 aa)) show a composition bias toward low complexity. Positions 264 to 343 (SSASASSSQA…TTTGGSGINS (80 aa)) are disordered. Over residues 330 to 340 (NTGGTTTGGSG) the composition is skewed to gly residues. The Peptidase C51 domain maps to 330-459 (NTGGTTTGGS…VSASGVTFLM (130 aa)).

The sequence is that of Secreted 45 kDa protein (usp45) from Lactococcus lactis subsp. cremoris (strain MG1363).